Consider the following 216-residue polypeptide: GTP:AMP phosphotransferase, mitochondrial (216 aa).

15-20 is a GTP binding site; it reads GSGKGT. An NMPbind region spans residues 35–64; the sequence is STGDILRQNIIKNTELGKKAKQYIAEGKLV. AMP contacts are provided by residues Thr36, Arg41, 62-64, 89-92, and Gln96; these read KLV and GFPR. The interval 125-162 is LID; it reads NRWIHAPSGRVYNIGFKNPKVPGKDDVTGEPLMQREDD. Residues Arg126 and 135–136 contribute to the GTP site; that span reads VY. 2 residues coordinate AMP: Arg159 and Arg170. GTP is bound at residue Thr199.

This sequence belongs to the adenylate kinase family. AK3 subfamily. In terms of assembly, monomer. As to expression, ubiquitously expressed with highest levels expressed in the abdomen, suggesting a function in muscle tissues.

The protein localises to the mitochondrion matrix. The catalysed reaction is a ribonucleoside 5'-triphosphate + AMP = a ribonucleoside 5'-diphosphate + ADP. In terms of biological role, involved in maintaining the homeostasis of cellular nucleotides by catalyzing the interconversion of nucleoside phosphates. Has GTP:AMP phosphotransferase and ITP:AMP phosphotransferase activities. The chain is GTP:AMP phosphotransferase, mitochondrial from Drosophila melanogaster (Fruit fly).